The sequence spans 152 residues: Endoribonuclease YbeY (152 aa).

3 residues coordinate Zn(2+): histidine 113, histidine 117, and histidine 123.

It belongs to the endoribonuclease YbeY family. Requires Zn(2+) as cofactor.

Its subcellular location is the cytoplasm. Single strand-specific metallo-endoribonuclease involved in late-stage 70S ribosome quality control and in maturation of the 3' terminus of the 16S rRNA. The chain is Endoribonuclease YbeY from Acidovorax ebreus (strain TPSY) (Diaphorobacter sp. (strain TPSY)).